A 208-amino-acid polypeptide reads, in one-letter code: ATP-dependent Clp protease proteolytic subunit 2 (208 aa).

S102 (nucleophile) is an active-site residue. The active site involves H127.

Belongs to the peptidase S14 family. Fourteen ClpP subunits assemble into 2 heptameric rings which stack back to back to give a disk-like structure with a central cavity, resembling the structure of eukaryotic proteasomes.

The protein localises to the cytoplasm. It catalyses the reaction Hydrolysis of proteins to small peptides in the presence of ATP and magnesium. alpha-casein is the usual test substrate. In the absence of ATP, only oligopeptides shorter than five residues are hydrolyzed (such as succinyl-Leu-Tyr-|-NHMec, and Leu-Tyr-Leu-|-Tyr-Trp, in which cleavage of the -Tyr-|-Leu- and -Tyr-|-Trp bonds also occurs).. Functionally, cleaves peptides in various proteins in a process that requires ATP hydrolysis. Has a chymotrypsin-like activity. Plays a major role in the degradation of misfolded proteins. In Chelativorans sp. (strain BNC1), this protein is ATP-dependent Clp protease proteolytic subunit 2.